A 304-amino-acid polypeptide reads, in one-letter code: Recombination-associated protein RdgC (304 aa).

The protein belongs to the RdgC family.

It is found in the cytoplasm. Its subcellular location is the nucleoid. Functionally, may be involved in recombination. This Shewanella baltica (strain OS223) protein is Recombination-associated protein RdgC.